The primary structure comprises 145 residues: MALRLILGFDYGTKQIGVAVGQVITGQARELCTLKAQNGIPDWNQVEALIKEWKPDAVVVGLPLNMDGTPSDMCLRAEKFARRLNGRYNIPFYTHDERLTTFEAKGERRDRGGQKGSYRDNPVDAIAAALLLQGWLDENTALFES.

Belongs to the YqgF nuclease family.

The protein resides in the cytoplasm. Could be a nuclease involved in processing of the 5'-end of pre-16S rRNA. This Pseudomonas fluorescens (strain SBW25) protein is Putative pre-16S rRNA nuclease.